A 288-amino-acid chain; its full sequence is Acetyl-coenzyme A carboxylase carboxyl transferase subunit beta, chloroplastic (288 aa).

The CoA carboxyltransferase N-terminal domain maps to 30–288 (LWIKCFDCGL…QILSLHNHSK (259 aa)). Zn(2+) contacts are provided by Cys-34, Cys-37, Cys-53, and Cys-56. Residues 34–56 (CFDCGLLMYSKVLKRNLKVCPQC) form a C4-type zinc finger.

Belongs to the AccD/PCCB family. As to quaternary structure, acetyl-CoA carboxylase is a heterohexamer composed of biotin carboxyl carrier protein, biotin carboxylase and 2 subunits each of ACCase subunit alpha and ACCase plastid-coded subunit beta (accD). Zn(2+) is required as a cofactor.

Its subcellular location is the plastid. The protein resides in the chloroplast stroma. The catalysed reaction is N(6)-carboxybiotinyl-L-lysyl-[protein] + acetyl-CoA = N(6)-biotinyl-L-lysyl-[protein] + malonyl-CoA. The protein operates within lipid metabolism; malonyl-CoA biosynthesis; malonyl-CoA from acetyl-CoA: step 1/1. Component of the acetyl coenzyme A carboxylase (ACC) complex. Biotin carboxylase (BC) catalyzes the carboxylation of biotin on its carrier protein (BCCP) and then the CO(2) group is transferred by the transcarboxylase to acetyl-CoA to form malonyl-CoA. The sequence is that of Acetyl-coenzyme A carboxylase carboxyl transferase subunit beta, chloroplastic from Pyropia yezoensis (Susabi-nori).